Consider the following 374-residue polypeptide: MISQINNEERDYKLEAYDYLLDPSLIASKPSAIRHESRLMIVRNSFLEEDCLTNKFTKNLLDEFREGDLVIVNNTKVMKARLKVELENKTLVELLVLERSHECIWLCLAKPAKKLKINRKLKLKSPLAQDINLIVDGVDEETGGRFIKFPENITCLNSMNELLDKYGEIPLPPYIKNSEEESFHEKSYQTEYATNPGAVAAPTAGLHLSKSLISNLKKKGVIILPITLHVGYGTFKPIDQEDLSNLKLHKEWVSVNKEVVEEIKRIKKTDRKIIAIGTTSVRALESCYSHEINDFIPIAKYVDLVIKPGYEFKVVDGLLTNFHLPKSSLLLLVSAMIGRERLLDLYKKAIKEKFRFFSYGDAMYISPDSLLEKK.

Belongs to the QueA family. In terms of assembly, monomer.

It is found in the cytoplasm. The enzyme catalyses 7-aminomethyl-7-carbaguanosine(34) in tRNA + S-adenosyl-L-methionine = epoxyqueuosine(34) in tRNA + adenine + L-methionine + 2 H(+). The protein operates within tRNA modification; tRNA-queuosine biosynthesis. Functionally, transfers and isomerizes the ribose moiety from AdoMet to the 7-aminomethyl group of 7-deazaguanine (preQ1-tRNA) to give epoxyqueuosine (oQ-tRNA). In Prochlorococcus marinus (strain MIT 9301), this protein is S-adenosylmethionine:tRNA ribosyltransferase-isomerase.